Consider the following 92-residue polypeptide: Small ribosomal subunit protein uS19 (92 aa).

This sequence belongs to the universal ribosomal protein uS19 family.

Functionally, protein S19 forms a complex with S13 that binds strongly to the 16S ribosomal RNA. This is Small ribosomal subunit protein uS19 from Bifidobacterium longum subsp. infantis (strain ATCC 15697 / DSM 20088 / JCM 1222 / NCTC 11817 / S12).